Reading from the N-terminus, the 450-residue chain is Exodeoxyribonuclease 7 large subunit (450 aa).

It belongs to the XseA family. Heterooligomer composed of large and small subunits.

It is found in the cytoplasm. It carries out the reaction Exonucleolytic cleavage in either 5'- to 3'- or 3'- to 5'-direction to yield nucleoside 5'-phosphates.. Its function is as follows. Bidirectionally degrades single-stranded DNA into large acid-insoluble oligonucleotides, which are then degraded further into small acid-soluble oligonucleotides. This chain is Exodeoxyribonuclease 7 large subunit, found in Shewanella frigidimarina (strain NCIMB 400).